A 241-amino-acid polypeptide reads, in one-letter code: MSFSSILSQDITDDITPPAYSATLGSREQIVFRAYQNEPWLAGTASNLILDKKLVIVDRELLFQVLMVENITKSKLTQIDDIKTKLDPKKQKVDRLRSGAQGNGAKKYEVITQVDMEDDGNVADNNCAKENNSNNNSSAAKNKAVFKLTLQSKSGDVFFAINSTPISWSSCMLGSKIVILPGTVFNRGVFILKDSQVIFLGGINRVWNENRDQKFCDYLESKLQRDKQLVNGGSKKRKAND.

Belongs to the RMI1 family. In terms of assembly, forms a complex with SGS1 and TOP3.

The protein resides in the cytoplasm. It is found in the nucleus. In terms of biological role, structure-specific DNA-binding protein with a preference for cruciform structures. Also binds single-stranded DNA (ssDNA). Functions together with SGS1 and TOP3 to maintain genome integrity. Essential for proper meiotic cell division. Required for normal S-phase progression and DNA damage response. Required for resistance to the DNA-damaging agent methyl methanesulfonate (MMS). The sequence is that of RecQ-mediated genome instability protein 1 from Saccharomyces cerevisiae (strain ATCC 204508 / S288c) (Baker's yeast).